A 23-amino-acid polypeptide reads, in one-letter code: Endochitinase B (23 aa).

It belongs to the glycosyl hydrolase 19 family. Chitinase class I subfamily.

The enzyme catalyses Random endo-hydrolysis of N-acetyl-beta-D-glucosaminide (1-&gt;4)-beta-linkages in chitin and chitodextrins.. Its function is as follows. Defense against chitin-containing fungal pathogens. The polypeptide is Endochitinase B (Pisum sativum (Garden pea)).